The following is a 590-amino-acid chain: Myo-inositol transporter 3A (590 aa).

Residues 1–57 are Cytoplasmic-facing; sequence MSATHIENRDDSFLENKGIDHIGRPENNNGSQEPPSPSGFGGHLIDENLVRVEGEDK. The span at 15–24 shows a compositional bias: basic and acidic residues; that stretch reads ENKGIDHIGR. The disordered stretch occupies residues 15–40; the sequence is ENKGIDHIGRPENNNGSQEPPSPSGF. The chain crosses the membrane as a helical span at residues 58–78; sequence VTWYLCFLISASAIAGFLFGY. The Extracellular segment spans residues 79–105; it reads DTGVVGVALPLVGTDLGGSALNSSQQE. N100 is a glycosylation site (N-linked (GlcNAc...) asparagine). The helical transmembrane segment at 106 to 126 threads the bilayer; it reads IITAGTTIGAIFGSAILGGWG. Residues 127 to 132 lie on the Cytoplasmic side of the membrane; that stretch reads DRLGRK. Residues 133-153 traverse the membrane as a helical segment; it reads GAILVSDVFFTIGAVIIASSY. The Extracellular segment spans residues 154–157; the sequence is SVPQ. A helical transmembrane segment spans residues 158–178; it reads IIVGRIILGIGVGGAAVIAPL. Topologically, residues 179–192 are cytoplasmic; the sequence is FITETAPTAVRGRC. A helical membrane pass occupies residues 193–213; it reads IGVNAFFIPFGQVVSDAIGAG. The Extracellular segment spans residues 214–222; that stretch reads VQNMHNGWR. The helical transmembrane segment at 223-243 threads the bilayer; the sequence is LLFALGAVPSLLQLLLFHYLP. Residues 244 to 325 are Cytoplasmic-facing; the sequence is ESPRILILKG…AVSALQAAGQ (82 aa). Residues 326 to 346 traverse the membrane as a helical segment; that stretch reads LTGFNTLLYYAGTLFGLLGLS. Topologically, residues 347–349 are extracellular; the sequence is NPA. The helical transmembrane segment at 350–370 threads the bilayer; it reads LGGLIPAGTNAVFVLIGMSLV. Over 371–376 the chain is Cytoplasmic; sequence DKVGRR. Residues 377–397 traverse the membrane as a helical segment; that stretch reads GLLLIGVPIMLLGHVWNIVSF. Residues 398 to 420 are Extracellular-facing; sequence YYMCKPTGGFLDTSYSYDTTDVG. Residues 421-441 traverse the membrane as a helical segment; the sequence is IVIGGIVFFVVGYGLTYSHLV. At 442-455 the chain is on the cytoplasmic side; sequence WYQAEYLTLEVRSM. The chain crosses the membrane as a helical span at residues 456 to 476; sequence GSGIATTVCWIANLVVSVSYL. Over 477 to 485 the chain is Extracellular; sequence SELETMTPS. The chain crosses the membrane as a helical span at residues 486–506; sequence GTYGFYFGISVIGFVFLVFCL. Residues 507-590 are Cytoplasmic-facing; that stretch reads PETKQLSIDE…GGKRTPSASV (84 aa).

This sequence belongs to the major facilitator superfamily. Sugar transporter (TC 2.A.1.1) family.

Its subcellular location is the cell membrane. The enzyme catalyses myo-inositol(out) + H(+)(out) = myo-inositol(in) + H(+)(in). Transporter for myo-inositol. The polypeptide is Myo-inositol transporter 3A (ITR3A) (Cryptococcus neoformans var. grubii serotype A (strain H99 / ATCC 208821 / CBS 10515 / FGSC 9487) (Filobasidiella neoformans var. grubii)).